We begin with the raw amino-acid sequence, 507 residues long: Cobyric acid synthase (507 aa).

The region spanning 251–448 (DIDIAVVHLP…LHGLFDSDAF (198 aa)) is the GATase cobBQ-type domain. Cys332 (nucleophile) is an active-site residue. The active site involves His440.

This sequence belongs to the CobB/CobQ family. CobQ subfamily.

Its pathway is cofactor biosynthesis; adenosylcobalamin biosynthesis. Functionally, catalyzes amidations at positions B, D, E, and G on adenosylcobyrinic A,C-diamide. NH(2) groups are provided by glutamine, and one molecule of ATP is hydrogenolyzed for each amidation. This chain is Cobyric acid synthase, found in Klebsiella pneumoniae subsp. pneumoniae (strain ATCC 700721 / MGH 78578).